The sequence spans 119 residues: Hemerythrin subunit A (119 aa).

The Fe cation site is built by H26, H55, E59, H74, H78, H107, and D112.

The protein belongs to the hemerythrin family.

Its function is as follows. Hemerythrin is a respiratory protein in blood cells of certain marine worms. The oxygen-binding site in each chain contains two iron atoms. The chain is Hemerythrin subunit A from Sipunculus nudus (Sipunculan worm).